A 311-amino-acid polypeptide reads, in one-letter code: 4-diphosphocytidyl-2-C-methyl-D-erythritol kinase (311 aa).

The active site involves lysine 16. 100-110 (PIGAGLAGGSS) is a binding site for ATP. Aspartate 142 is a catalytic residue.

The protein belongs to the GHMP kinase family. IspE subfamily.

It carries out the reaction 4-CDP-2-C-methyl-D-erythritol + ATP = 4-CDP-2-C-methyl-D-erythritol 2-phosphate + ADP + H(+). It participates in isoprenoid biosynthesis; isopentenyl diphosphate biosynthesis via DXP pathway; isopentenyl diphosphate from 1-deoxy-D-xylulose 5-phosphate: step 3/6. In terms of biological role, catalyzes the phosphorylation of the position 2 hydroxy group of 4-diphosphocytidyl-2C-methyl-D-erythritol. This chain is 4-diphosphocytidyl-2-C-methyl-D-erythritol kinase, found in Prochlorococcus marinus (strain MIT 9301).